The chain runs to 103 residues: Eukaryotic translation initiation factor 4E-1A-binding protein homolog (103 aa).

The segment at 49–103 (NSPLSKTPPPQLAHITNTELNKKVEKSTTTPTTTTPPTTTAKPKPTNDDDIFPME) is disordered. Residues 76-92 (TTTPTTTTPPTTTAKPK) are compositionally biased toward low complexity.

This sequence belongs to the eIF4E-binding protein family.

Functionally, regulates assembly of the eIF4F complex. This Dictyostelium discoideum (Social amoeba) protein is Eukaryotic translation initiation factor 4E-1A-binding protein homolog (febA).